A 253-amino-acid chain; its full sequence is Vitamin B12 import ATP-binding protein BtuD (253 aa).

The ABC transporter domain occupies 4-236 (LQLSNVSVDT…NILSEVFEVD (233 aa)). 32-39 (GPNGAGKS) provides a ligand contact to ATP.

It belongs to the ABC transporter superfamily. Vitamin B12 importer (TC 3.A.1.13.1) family. In terms of assembly, the complex is composed of two ATP-binding proteins (BtuD), two transmembrane proteins (BtuC) and a solute-binding protein (BtuF).

It is found in the cell inner membrane. It carries out the reaction an R-cob(III)alamin(out) + ATP + H2O = an R-cob(III)alamin(in) + ADP + phosphate + H(+). In terms of biological role, part of the ABC transporter complex BtuCDF involved in vitamin B12 import. Responsible for energy coupling to the transport system. This is Vitamin B12 import ATP-binding protein BtuD from Yersinia enterocolitica serotype O:8 / biotype 1B (strain NCTC 13174 / 8081).